Consider the following 421-residue polypeptide: Serine--tRNA ligase (421 aa).

L-serine is bound at residue Thr-229 to Glu-231. ATP contacts are provided by residues Arg-260–Glu-262 and Val-276. Position 283 (Glu-283) interacts with L-serine. Glu-347–Ser-350 contacts ATP. Position 383 (Thr-383) interacts with L-serine.

Belongs to the class-II aminoacyl-tRNA synthetase family. Type-1 seryl-tRNA synthetase subfamily. In terms of assembly, homodimer. The tRNA molecule binds across the dimer.

The protein resides in the cytoplasm. The enzyme catalyses tRNA(Ser) + L-serine + ATP = L-seryl-tRNA(Ser) + AMP + diphosphate + H(+). It catalyses the reaction tRNA(Sec) + L-serine + ATP = L-seryl-tRNA(Sec) + AMP + diphosphate + H(+). The protein operates within aminoacyl-tRNA biosynthesis; selenocysteinyl-tRNA(Sec) biosynthesis; L-seryl-tRNA(Sec) from L-serine and tRNA(Sec): step 1/1. Functionally, catalyzes the attachment of serine to tRNA(Ser). Is also able to aminoacylate tRNA(Sec) with serine, to form the misacylated tRNA L-seryl-tRNA(Sec), which will be further converted into selenocysteinyl-tRNA(Sec). In Nitrosopumilus maritimus (strain SCM1), this protein is Serine--tRNA ligase.